A 460-amino-acid polypeptide reads, in one-letter code: UDP-N-acetylmuramate--L-alanine ligase (460 aa).

118 to 124 contributes to the ATP binding site; sequence GAHGKTT.

This sequence belongs to the MurCDEF family.

It localises to the cytoplasm. It catalyses the reaction UDP-N-acetyl-alpha-D-muramate + L-alanine + ATP = UDP-N-acetyl-alpha-D-muramoyl-L-alanine + ADP + phosphate + H(+). It functions in the pathway cell wall biogenesis; peptidoglycan biosynthesis. Its function is as follows. Cell wall formation. This Clostridium botulinum (strain Eklund 17B / Type B) protein is UDP-N-acetylmuramate--L-alanine ligase.